Reading from the N-terminus, the 551-residue chain is Glucans biosynthesis protein D (551 aa).

Positions 1 to 32 form a signal peptide, tat-type signal; the sequence is MDRRRFIKGSMAMAAVCGTSGIASLFSQAAFA.

This sequence belongs to the OpgD/OpgG family. In terms of processing, predicted to be exported by the Tat system. The position of the signal peptide cleavage has not been experimentally proven.

Its subcellular location is the periplasm. Its pathway is glycan metabolism; osmoregulated periplasmic glucan (OPG) biosynthesis. Its function is as follows. Probably involved in the control of the structural glucose backbone of osmoregulated periplasmic glucans (OPGs). This is Glucans biosynthesis protein D from Escherichia coli O127:H6 (strain E2348/69 / EPEC).